The chain runs to 461 residues: Photosystem II CP43 reaction center protein (461 aa).

A propeptide spanning residues 1–2 is cleaved from the precursor; sequence ME. Position 3 is an N-acetylthreonine (Thr-3). A Phosphothreonine modification is found at Thr-3. 5 helical membrane passes run 57–81, 122–143, 166–188, 243–263, and 279–300; these read LFEV…PHLA, LIGP…KDKN, KAMY…RIIT, TPWP…LSYS, and WFNN…ASQS. Residue Glu-355 coordinates [CaMn4O5] cluster. Residues 435–459 form a helical membrane-spanning segment; that stretch reads RARAAAAGFEKGIDRLDEPVLSMRP.

It belongs to the PsbB/PsbC family. PsbC subfamily. PSII is composed of 1 copy each of membrane proteins PsbA, PsbB, PsbC, PsbD, PsbE, PsbF, PsbH, PsbI, PsbJ, PsbK, PsbL, PsbM, PsbT, PsbX, PsbY, PsbZ, Psb30/Ycf12, at least 3 peripheral proteins of the oxygen-evolving complex and a large number of cofactors. It forms dimeric complexes. It depends on Binds multiple chlorophylls and provides some of the ligands for the Ca-4Mn-5O cluster of the oxygen-evolving complex. It may also provide a ligand for a Cl- that is required for oxygen evolution. PSII binds additional chlorophylls, carotenoids and specific lipids. as a cofactor.

It localises to the plastid. The protein localises to the chloroplast thylakoid membrane. One of the components of the core complex of photosystem II (PSII). It binds chlorophyll and helps catalyze the primary light-induced photochemical processes of PSII. PSII is a light-driven water:plastoquinone oxidoreductase, using light energy to abstract electrons from H(2)O, generating O(2) and a proton gradient subsequently used for ATP formation. This is Photosystem II CP43 reaction center protein from Tetradesmus obliquus (Green alga).